We begin with the raw amino-acid sequence, 342 residues long: Elongation factor Ts (342 aa).

The interval 80–83 (TDFV) is involved in Mg(2+) ion dislocation from EF-Tu.

It belongs to the EF-Ts family.

It localises to the cytoplasm. In terms of biological role, associates with the EF-Tu.GDP complex and induces the exchange of GDP to GTP. It remains bound to the aminoacyl-tRNA.EF-Tu.GTP complex up to the GTP hydrolysis stage on the ribosome. This chain is Elongation factor Ts, found in Lactobacillus delbrueckii subsp. bulgaricus (strain ATCC 11842 / DSM 20081 / BCRC 10696 / JCM 1002 / NBRC 13953 / NCIMB 11778 / NCTC 12712 / WDCM 00102 / Lb 14).